The sequence spans 548 residues: Natural resistance-associated macrophage protein 1 (548 aa).

A compositionally biased stretch (polar residues) spans 1-12; the sequence is MSGDTGTPNQGG. The interval 1-38 is disordered; it reads MSGDTGTPNQGGTRYGSISSPPSPGPQQAPPGGTYLSE. At 1–55 the chain is on the cytoplasmic side; sequence MSGDTGTPNQGGTRYGSISSPPSPGPQQAPPGGTYLSEKIPIPDTESGAFSLRKL. A helical transmembrane segment spans residues 56 to 73; sequence WAFTGPGFLMSIAFLDPG. The Extracellular segment spans residues 74 to 82; sequence NIESDLQAG. A helical transmembrane segment spans residues 83–102; it reads AVAGFKLLWVLLWATVLGLL. The Cytoplasmic portion of the chain corresponds to 103-139; that stretch reads CQRLAARLGVVTGKDLGEVCHLYYPKVPRTLLWLTIE. A helical membrane pass occupies residues 140–160; that stretch reads LAIVGSDMQEVIGTAIAFSLL. Residues 161-164 lie on the Extracellular side of the membrane; that stretch reads SAGR. A helical transmembrane segment spans residues 165–184; that stretch reads IPLWGGVLITIVDTFFFLFL. Over 185 to 193 the chain is Cytoplasmic; sequence DNYGLRKLE. Residues 194 to 214 form a helical membrane-spanning segment; the sequence is AFFGFLITIMALTFGYEYVVA. Residues 215-237 lie on the Extracellular side of the membrane; the sequence is RPAQGALLQGLFLPSCPGCGQPE. Residues 238–256 form a helical membrane-spanning segment; the sequence is LLQAVGIVGAIIMPHNIYL. At 257 to 284 the chain is on the cytoplasmic side; the sequence is HSSLVKSREVDRSRRADIREANMYFLIE. The chain crosses the membrane as a helical span at residues 285–304; it reads ATIALSVSFFINLFVMAVFG. Residues 305–346 are Extracellular-facing; that stretch reads QAFYKQTNQAAFNICANSSLHDYATIFPRDNLTVAVDIYQGG. 2 N-linked (GlcNAc...) asparagine glycosylation sites follow: asparagine 321 and asparagine 335. Residues 347 to 366 form a helical membrane-spanning segment; the sequence is VILGCLFGPAALYIWAVGLL. Over 367–397 the chain is Cytoplasmic; that stretch reads AAGQSSTMTGTYAGQFVMEGFLKLRWSRFAR. A helical membrane pass occupies residues 398 to 415; the sequence is VLLTRSCAIPPTVLLAVF. Over 416–426 the chain is Extracellular; it reads RDLQDLSGLND. A helical membrane pass occupies residues 427 to 447; it reads LLNVLQSLLLPFAVLPILTFT. Residues 448 to 463 are Cytoplasmic-facing; the sequence is SMPALMQEFANGLVSK. Residues 464 to 485 traverse the membrane as a helical segment; the sequence is IITSSIMVLVCAVNLYFVISYV. Residues 486 to 493 are Extracellular-facing; the sequence is PSLPHPAY. A helical membrane pass occupies residues 494–513; sequence FSLVALLAAAYLGLTTYLVW. Residues 514–548 lie on the Cytoplasmic side of the membrane; the sequence is TCLITQGATRLAHSSHQRFLYGLPGEDQEEGRTSG.

It belongs to the NRAMP family.

It localises to the late endosome membrane. It is found in the lysosome membrane. The enzyme catalyses Zn(2+)(in) + H(+)(out) = Zn(2+)(out) + H(+)(in). It carries out the reaction Fe(2+)(in) + H(+)(out) = Fe(2+)(out) + H(+)(in). The catalysed reaction is Mn(2+)(in) + H(+)(out) = Mn(2+)(out) + H(+)(in). Its function is as follows. Macrophage-specific antiporter that fluxes metal ions in either direction against a proton gradient. Localized to late endosomal lysosomal membranes, delivers bivalent cations from the cytosol into these acidic compartments where they may directly affect antimicrobial activity. Involved in iron metabolism and host natural resistance to infection with intracellular parasites. Pathogen resistance involves sequestration of Fe(2+) and Mn(2+), cofactors of both prokaryotic and eukaryotic catalases and superoxide dismutases, not only to protect the macrophage against its own generation of reactive oxygen species, but to deny the cations to the pathogen for synthesis of its protective enzymes. The chain is Natural resistance-associated macrophage protein 1 (SLC11A1) from Ovis aries (Sheep).